We begin with the raw amino-acid sequence, 678 residues long: Secretin ExeD (678 aa).

The N-terminal stretch at 1-25 (MINKGKSWRLATVAAALMMAGSAWA) is a signal peptide. An N0 region spans residues 26 to 122 (TEYSASFKNA…VVDETNPGIG (97 aa)). Positions 124–188 (EMVTRVVPVR…EVVRRVDKAG (65 aa)) are N1. The segment at 189–264 (DQEVDIIKLR…MVRQLDRDLQ (76 aa)) is N2. The segment at 267-347 (GNTRVFYLKY…ELEQVVAKLD (81 aa)) is N3. Residues 352-602 (QVLVEAIIVE…VFIRPTILRD (251 aa)) form a secretin region. Residues 604 to 678 (HVYSGISSNK…GAQPFVQGNK (75 aa)) form a s domain region.

This sequence belongs to the bacterial secretin family. GSP D subfamily. In terms of assembly, forms a cylindrical channel with 15 subunits.

It is found in the cell outer membrane. Functionally, involved in a type II secretion system (T2SS, formerly general secretion pathway, GSP) for the export of proteins. This subunit forms the outer membrane channel. The sequence is that of Secretin ExeD (exeD) from Aeromonas salmonicida.